The chain runs to 157 residues: S-ribosylhomocysteine lyase (157 aa).

Fe cation is bound by residues His53, His57, and Cys124.

The protein belongs to the LuxS family. Homodimer. Requires Fe cation as cofactor.

The enzyme catalyses S-(5-deoxy-D-ribos-5-yl)-L-homocysteine = (S)-4,5-dihydroxypentane-2,3-dione + L-homocysteine. Functionally, involved in the synthesis of autoinducer 2 (AI-2) which is secreted by bacteria and is used to communicate both the cell density and the metabolic potential of the environment. The regulation of gene expression in response to changes in cell density is called quorum sensing. Catalyzes the transformation of S-ribosylhomocysteine (RHC) to homocysteine (HC) and 4,5-dihydroxy-2,3-pentadione (DPD). In Borrelia garinii subsp. bavariensis (strain ATCC BAA-2496 / DSM 23469 / PBi) (Borreliella bavariensis), this protein is S-ribosylhomocysteine lyase.